We begin with the raw amino-acid sequence, 145 residues long: MKLNELKYTPGSKTKATIVGRGMASGKGKTATRGHKGQNSRSGGGVRPGFEGGQTPLFRRLPKVGFTSLNQKQYTILNLSDLETLGLEKIDHESLINSKIIKNNASLIKILANGTLTKKVDVKVNKISKAAKDAIEKLGGKVEVI.

Residues glycine 20 to glutamine 54 are disordered. Residues serine 42–glycine 52 are compositionally biased toward gly residues.

It belongs to the universal ribosomal protein uL15 family. As to quaternary structure, part of the 50S ribosomal subunit.

In terms of biological role, binds to the 23S rRNA. This chain is Large ribosomal subunit protein uL15, found in Mycoplasma mycoides subsp. mycoides SC (strain CCUG 32753 / NCTC 10114 / PG1).